The sequence spans 658 residues: MKRQFEIVSAYSPQGDQPVAIEKLVEGINSGKKKQVLLGATGTGKTFTISNVIKEVQKPTLVMAHNKTLAGQLYSELKDFFPNNAVEYFVSYYDYYQPEAYVPQTDTFIEKDAQINDEIDKLRHSATSALFERDDVIIVASVSCIYGLGSPEEYRELVVSLRVGMEKDRNQLLRELVDVQYGRNDIDFKRGTFRVRGDVVEIFPASLDEHCIRIEFFGDEIDRIREVNALTGEVLAERDHVAIFPASHFVTREEKMKVAIENIEKELEERLKELNDNGKLLEAQRIEQRTRYDLEMMREMGFCSGIENYSRHLTLRPAGATPYTLLDYFPEDFLIVMDESHVSVPQVRAMYNGDQARKQVLVDHGFRLPSALDNRPLTFDEFEEKTNQVIYVSATPGPYELEQSPEVIEQIIRPTGLLDPPIDIRPIEGQIDDLLGEIQDRIAKNERVLITTLTKKMSEDLTDYLKDVGIKVNYLHSEVKTLERIEIIRDLRLGKFDVLVGINLLREGLDIPEVSLVAILDADKEGFLRSERSLIQTIGRAARNENGRVIMYADRITRSMGIAIEETQRRRSIQEAYNEEYGITPKTIQKGVRDVIRATTAAEEPETYEATPAKKMTKKEREKTIAKMEAEMKEAAKALDFERAAELRDLLLELKAEG.

One can recognise a Helicase ATP-binding domain in the interval 26–413 (EGINSGKKKQ…SPEVIEQIIR (388 aa)). 39 to 46 (GATGTGKT) provides a ligand contact to ATP. The Beta-hairpin signature appears at 92 to 115 (YYDYYQPEAYVPQTDTFIEKDAQI). One can recognise a Helicase C-terminal domain in the interval 430-596 (QIDDLLGEIQ…TIQKGVRDVI (167 aa)). A UVR domain is found at 622-657 (EKTIAKMEAEMKEAAKALDFERAAELRDLLLELKAE).

Belongs to the UvrB family. As to quaternary structure, forms a heterotetramer with UvrA during the search for lesions. Interacts with UvrC in an incision complex.

It is found in the cytoplasm. Functionally, the UvrABC repair system catalyzes the recognition and processing of DNA lesions. A damage recognition complex composed of 2 UvrA and 2 UvrB subunits scans DNA for abnormalities. Upon binding of the UvrA(2)B(2) complex to a putative damaged site, the DNA wraps around one UvrB monomer. DNA wrap is dependent on ATP binding by UvrB and probably causes local melting of the DNA helix, facilitating insertion of UvrB beta-hairpin between the DNA strands. Then UvrB probes one DNA strand for the presence of a lesion. If a lesion is found the UvrA subunits dissociate and the UvrB-DNA preincision complex is formed. This complex is subsequently bound by UvrC and the second UvrB is released. If no lesion is found, the DNA wraps around the other UvrB subunit that will check the other stand for damage. This is UvrABC system protein B from Bacillus cereus (strain ZK / E33L).